The chain runs to 638 residues: MEPSALSPSGATLPLPLSLAPPPLPLPAAAVVHVSFPEVTSALLESLNQQRLQGQLCDVSIRVQGREFRAHRAVLAASSPYFHDQVLLKGMTSISLPSVMDPGAFETVLASAYTGRLSMAAADIVNFLTVGSVLQMWHIVDKCTELLREGRSAATTTTVTTAAAPSVSVPCASVPSGNGGTVAPATVGSVRSHTSSRASENQSPSSSNYFSPRESTDFSSTSQDAFVASAAGSGNRRDGGPVFPAPVVGSAGTTSGKLLLEADELCDDGGDGRGAVAPGAGLRRSNCMPASAVPQKHWVYVKQARNCPAPASLVHQDPDLEDEEEEEDLVLTCEDDEDEEMGGGSGVPAGGEPEATLSISDVRTLTEPADKGEEQVNFCESSNDFGPYEGGGAGAGLDDPGGPTPSSYALTHPPRPLLPLDVPGNQILVFPSSSSQAPGQPPGNTAEHGAVTLGGTSAVGLGIPSGSGGAPGGTGNSDGNKIFLCHCGKAFSHKSMRDRHVNMHLNLRPFDCPVCNKKFKMKHHLTEHMKTHTGLKPYECSVCAKKFMWRDSFMRHRGHCERRHRMGVGGVGSGPGPGPGPGTPSGPALQPKRESSTVGGGSGDEANSATPPSHRRVWSPPSVHKVEMDFSGGGGAAH.

Residues 57 to 121 (CDVSIRVQGR…AYTGRLSMAA (65 aa)) enclose the BTB domain. Disordered stretches follow at residues 171 to 223 (CASV…STSQ), 229 to 248 (SAAGSGNRRDGGPVFPAPVV), 335 to 354 (DDEDEEMGGGSGVPAGGEPE), and 367 to 451 (EPAD…HGAV). Residues 189-210 (SVRSHTSSRASENQSPSSSNYF) are compositionally biased toward polar residues. Ser-203 carries the post-translational modification Phosphoserine. The C2H2-type 1; atypical zinc finger occupies 483-504 (FLCHCGKAFSHKSMRDRHVNMH). 2 C2H2-type zinc fingers span residues 510–532 (FDCPVCNKKFKMKHHLTEHMKTH) and 538–559 (YECSVCAKKFMWRDSFMRHRGH). The interval 564–638 (HRMGVGGVGS…DFSGGGGAAH (75 aa)) is disordered.

This sequence belongs to the krueppel C2H2-type zinc-finger protein family.

The protein resides in the nucleus. May be involved in transcriptional regulation. The chain is Zinc finger and BTB domain-containing protein 22 (Zbtb22) from Mus musculus (Mouse).